Reading from the N-terminus, the 872-residue chain is Lysosomal cholesterol signaling protein (872 aa).

Over 1–40 (MNSFSNLPAENLTIAVNMTKTLPTAVMHGFNSTNDPPSMS) the chain is Lumenal. The tract at residues 3-372 (SFSNLPAENL…SAWLLTFPTM (370 aa)) is PIN-like transporter. N-linked (GlcNAc...) asparagine glycosylation is found at asparagine 11, asparagine 17, and asparagine 31. The helical transmembrane segment at 41–61 (ITRLFPALLECFGIVLCGYIA) threads the bilayer. Residues phenylalanine 45 and tyrosine 59 each coordinate cholesterol. Topologically, residues 62 to 81 (GRANVITSTQAKGLGNFVSR) are cytoplasmic. A helical transmembrane segment spans residues 82–102 (FALPALLFKNMVVLNFSNVDW). The Lumenal segment spans residues 103-106 (SFLY). A helical membrane pass occupies residues 107–127 (SILIAKASVFFIVCVLTLLVA). Over 128–135 (SPDSRFSK) the chain is Cytoplasmic. Residues 136–156 (AGLFPIFATQSNDFALGYPIV) traverse the membrane as a discontinuously helical segment. Residues 157–169 (EALYQTTYPEYLQ) lie on the Lumenal side of the membrane. A helical transmembrane segment spans residues 170-190 (YIYLVAPISLMMLNPIGFIFC). Over 191–215 (EIQKWKDTQNASQNKIKIVGLGLLR) the chain is Cytoplasmic. A discontinuously helical membrane pass occupies residues 216 to 236 (VLQNPIVFMVFIGIAFNFILD). Over 237-245 (RKVPVYVEN) the chain is Lumenal. Residues 246–266 (FLDGLGNSFSGSALFYLGLTM) form a discontinuously helical membrane-spanning segment. The Cytoplasmic portion of the chain corresponds to 267–275 (VGKIKRLKK). Residues glycine 268, lysine 269, and isoleucine 270 each coordinate cholesterol. Residues 276-296 (SAFVVLILLITAKLLVLPLLC) traverse the membrane as a helical segment. Over 297 to 317 (REMVELLDKGDSVVNHTSLSN) the chain is Lumenal. N-linked (GlcNAc...) asparagine glycosylation is present at asparagine 311. The discontinuously helical transmembrane segment at 318–338 (YAFLYGVFPVAPGVAIFATQF) threads the bilayer. The Cytoplasmic portion of the chain corresponds to 339 to 348 (NMEVEIITSG). A helical transmembrane segment spans residues 349–369 (MVISTFVSAPIMYVSAWLLTF). The Lumenal segment spans residues 370-383 (PTMDPKPLAYAIQN). A GPCR region spans residues 382 to 719 (QNVSFDISIV…FGIFGLDKHL (338 aa)). An N-linked (GlcNAc...) asparagine glycan is attached at asparagine 383. The helical transmembrane segment at 384-404 (VSFDISIVSLISLIWSQAILL) threads the bilayer. Topologically, residues 405-416 (LSKKYKQLPHML) are cytoplasmic. The chain crosses the membrane as a helical span at residues 417-437 (TTNLLIAQSIVCAGMMIWNFV). Topologically, residues 438–440 (KEK) are lumenal. A helical transmembrane segment spans residues 441–461 (NFVGQILVFVLLYSSLYSTYL). Topologically, residues 462-482 (WTGLLAISLFLLKKRERVQIP) are cytoplasmic. A helical membrane pass occupies residues 483 to 503 (VGIIIISGWGIPALLVGVLLI). The Lumenal portion of the chain corresponds to 504-522 (TGKHSGDSIDSAFFYGKEQ). A helical membrane pass occupies residues 523–543 (MITTAVTLFCSILIAGISLMC). Topologically, residues 544–662 (MNRTAQAGSY…GDQQLTRHVL (119 aa)) are cytoplasmic. Arginine 659 is a cholesterol binding site. The helical transmembrane segment at 663 to 683 (LCLLLIIGLFANLSSCLWWLF) threads the bilayer. At 684–693 (NQEPGRLYVE) the chain is on the lumenal side. Residues 694–714 (LQFFCAVFNFGQGFISFGIFG) form a helical membrane-spanning segment. The Cytoplasmic portion of the chain corresponds to 715 to 872 (LDKHLIILPF…SSPPSHSPKT (158 aa)). The 79-residue stretch at 759–837 (YHRDLCIRNI…DEYLFYRFLQ (79 aa)) folds into the DEP domain.

As to quaternary structure, homodimer; via the transporter region and DEP domain. Interacts with the GATOR1 complex; preventing interaction between GATOR1 and KICSTOR; interaction is disrupted upon cholesterol starvation.

The protein resides in the lysosome membrane. Functionally, cholesterol-binding protein that acts as a regulator of mTORC1 signaling pathway. Acts as a sensor of cholesterol to signal cholesterol sufficiency to mTORC1: in presence of cholesterol, binds cholesterol, leading to disruption of the interaction between the GATOR1 and KICSTOR complexes and promotion of mTORC1 signaling. Upon cholesterol starvation, GPR155/LYCHOS is unable to perturb the association between GATOR1 and KICSTOR, leading to mTORC1 signaling inhibition. Binds indole-3-acetic acid and may play a role in tryptophan metabolism. This chain is Lysosomal cholesterol signaling protein (GPR155), found in Pongo abelii (Sumatran orangutan).